A 550-amino-acid chain; its full sequence is Glucose-6-phosphate isomerase 1 (550 aa).

Glutamate 358 acts as the Proton donor in catalysis. Residues histidine 389 and lysine 513 contribute to the active site.

It belongs to the GPI family.

The protein localises to the cytoplasm. The enzyme catalyses alpha-D-glucose 6-phosphate = beta-D-fructose 6-phosphate. Its pathway is carbohydrate biosynthesis; gluconeogenesis. It participates in carbohydrate degradation; glycolysis; D-glyceraldehyde 3-phosphate and glycerone phosphate from D-glucose: step 2/4. Its function is as follows. Catalyzes the reversible isomerization of glucose-6-phosphate to fructose-6-phosphate. This Streptomyces coelicolor (strain ATCC BAA-471 / A3(2) / M145) protein is Glucose-6-phosphate isomerase 1.